We begin with the raw amino-acid sequence, 580 residues long: Acyl-coenzyme A synthetase ACSM4, mitochondrial (580 aa).

The N-terminal 22 residues, 1–22 (MKVLLRCQRLRFIWLAKPAGRH), are a transit peptide targeting the mitochondrion. ATP contacts are provided by residues 229–237 (TSGTTGSPK), 368–373 (EGYGQT), aspartate 455, arginine 470, and lysine 566.

Belongs to the ATP-dependent AMP-binding enzyme family. The cofactor is Mg(2+). Requires Mn(2+) as cofactor. As to expression, detected in adult olfactory epithelium.

It is found in the mitochondrion. The enzyme catalyses a medium-chain fatty acid + ATP + CoA = a medium-chain fatty acyl-CoA + AMP + diphosphate. The catalysed reaction is hexanoate + ATP + CoA = hexanoyl-CoA + AMP + diphosphate. It carries out the reaction octanoate + ATP + CoA = octanoyl-CoA + AMP + diphosphate. It catalyses the reaction decanoate + ATP + CoA = decanoyl-CoA + AMP + diphosphate. The enzyme catalyses dodecanoate + ATP + CoA = dodecanoyl-CoA + AMP + diphosphate. Its function is as follows. Catalyzes the activation of fatty acids by CoA to produce an acyl-CoA, the first step in fatty acid metabolism. Capable of activating medium-chain fatty acids with a preference for C6-12 fatty acids. This chain is Acyl-coenzyme A synthetase ACSM4, mitochondrial (Acsm4), found in Rattus norvegicus (Rat).